The chain runs to 483 residues: E3 ubiquitin-protein ligase TRIM50 (483 aa).

The segment at 16-57 (CPICLEVFKEPLMLQCGHSYCKNCLDSLSEHLDSELRCPVCR) adopts an RING-type zinc-finger fold. The B box-type zinc finger occupies 84–125 (TEPTVCVHHRNPLSLFCEKDQEFICGLCGLLGSHQHHRVTPV). Residues C89, H92, C111, and H117 each contribute to the Zn(2+) site. 2 coiled-coil regions span residues 127 to 169 (TVYS…NESD) and 203 to 236 (GLVA…GNES). The region spanning 275-474 (DIKLTVWKRL…LPMVLPPPSA (200 aa)) is the B30.2/SPRY domain. At K372 the chain carries N6-acetyllysine.

It belongs to the TRIM/RBCC family. In terms of assembly, can form dimers and trimers. Interacts with several E2 ubiquitin-conjugating enzymes, including UBE2L6, UBE2E1, UBE2E3. No interaction with UBE2H. Interacts with BECN1. Interacts with SQSTM1. Interacts with NLRP3. Post-translationally, auto-ubiquitinated. Acetylated by EP300 and KAT2B. HDAC6 drives TRIM50 deacetylation. Acetylation antagonizes with TRIM50 ubiquitination.

Its subcellular location is the cytoplasm. The catalysed reaction is S-ubiquitinyl-[E2 ubiquitin-conjugating enzyme]-L-cysteine + [acceptor protein]-L-lysine = [E2 ubiquitin-conjugating enzyme]-L-cysteine + N(6)-ubiquitinyl-[acceptor protein]-L-lysine.. E3 ubiquitin-protein ligase that ubiquitinates Beclin-1/BECN1 in a 'Lys-63'-dependent manner enhancing its binding to ULK1. In turn, promotes starvation-induced autophagy activation. Also interacts with p62/SQSTM1 protein and thereby induces the formation and the autophagy clearance of aggresome-associated polyubiquitinated proteins through HDAC6 interaction. Also promotes NLRP3 inflammasome activation by directly inducing NLRP3 oligomerization independent of its E3 ligase function. The protein is E3 ubiquitin-protein ligase TRIM50 (Trim50) of Rattus norvegicus (Rat).